Here is a 212-residue protein sequence, read N- to C-terminus: Methylthioribulose-1-phosphate dehydratase (212 aa).

Residues histidine 97 and histidine 99 each coordinate Zn(2+).

This sequence belongs to the aldolase class II family. MtnB subfamily. As to quaternary structure, homotetramer. The cofactor is Zn(2+).

The catalysed reaction is 5-(methylsulfanyl)-D-ribulose 1-phosphate = 5-methylsulfanyl-2,3-dioxopentyl phosphate + H2O. The protein operates within amino-acid biosynthesis; L-methionine biosynthesis via salvage pathway; L-methionine from S-methyl-5-thio-alpha-D-ribose 1-phosphate: step 2/6. In terms of biological role, catalyzes the dehydration of methylthioribulose-1-phosphate (MTRu-1-P) into 2,3-diketo-5-methylthiopentyl-1-phosphate (DK-MTP-1-P). The protein is Methylthioribulose-1-phosphate dehydratase of Bacillus mycoides (strain KBAB4) (Bacillus weihenstephanensis).